A 299-amino-acid polypeptide reads, in one-letter code: UDP-N-acetylenolpyruvoylglucosamine reductase (299 aa).

The 166-residue stretch at 28–193 folds into the FAD-binding PCMH-type domain; that stretch reads KVGGPADILA…LSAKFELQAG (166 aa). Arginine 172 is an active-site residue. Serine 222 (proton donor) is an active-site residue. Glutamate 292 is a catalytic residue.

Belongs to the MurB family. Requires FAD as cofactor.

It localises to the cytoplasm. The enzyme catalyses UDP-N-acetyl-alpha-D-muramate + NADP(+) = UDP-N-acetyl-3-O-(1-carboxyvinyl)-alpha-D-glucosamine + NADPH + H(+). Its pathway is cell wall biogenesis; peptidoglycan biosynthesis. Its function is as follows. Cell wall formation. The polypeptide is UDP-N-acetylenolpyruvoylglucosamine reductase (Lactococcus lactis subsp. cremoris (strain SK11)).